Here is a 45-residue protein sequence, read N- to C-terminus: uncharacterized protein (45 aa).

Basic and acidic residues predominate over residues 1–26; the sequence is MIMGKDRQEKKLKASGRVESDRDQSI. Positions 1–45 are disordered; it reads MIMGKDRQEKKLKASGRVESDRDQSIHYDGATSLEQNGRFKKRKS.

This is an uncharacterized protein from Bacillus subtilis (strain 168).